The sequence spans 373 residues: Erythronate-4-phosphate dehydrogenase (373 aa).

Ser45 and Thr66 together coordinate substrate. Residues Asp146 and Thr175 each coordinate NAD(+). Residue Arg208 is part of the active site. Residue Asp232 coordinates NAD(+). Residue Glu237 is part of the active site. The Proton donor role is filled by His254. NAD(+) is bound at residue Gly257. Tyr258 provides a ligand contact to substrate.

This sequence belongs to the D-isomer specific 2-hydroxyacid dehydrogenase family. PdxB subfamily. In terms of assembly, homodimer.

It is found in the cytoplasm. The catalysed reaction is 4-phospho-D-erythronate + NAD(+) = (R)-3-hydroxy-2-oxo-4-phosphooxybutanoate + NADH + H(+). Its pathway is cofactor biosynthesis; pyridoxine 5'-phosphate biosynthesis; pyridoxine 5'-phosphate from D-erythrose 4-phosphate: step 2/5. Functionally, catalyzes the oxidation of erythronate-4-phosphate to 3-hydroxy-2-oxo-4-phosphonooxybutanoate. The chain is Erythronate-4-phosphate dehydrogenase from Serratia proteamaculans (strain 568).